A 423-amino-acid chain; its full sequence is Methionine aminopeptidase 2 (423 aa).

Residues 1–17 (MTDVIDAKPEEAKKVPP) are compositionally biased toward basic and acidic residues. The tract at residues 1-89 (MTDVIDAKPE…IQPYKDDNAY (89 aa)) is disordered. Over residues 18 to 29 (EVEDEDSGDESA) the composition is skewed to acidic residues. Positions 41–54 (KKKKKKKKPKKKKK) are enriched in basic residues. A substrate-binding site is contributed by histidine 176. A divalent metal cation is bound by residues aspartate 196, aspartate 207, and histidine 276. Histidine 284 contacts substrate. Residues glutamate 309 and glutamate 404 each coordinate a divalent metal cation.

Belongs to the peptidase M24A family. Methionine aminopeptidase eukaryotic type 2 subfamily. It depends on Co(2+) as a cofactor. Zn(2+) serves as cofactor. The cofactor is Mn(2+). Requires Fe(2+) as cofactor.

The protein resides in the cytoplasm. The enzyme catalyses Release of N-terminal amino acids, preferentially methionine, from peptides and arylamides.. In terms of biological role, cotranslationally removes the N-terminal methionine from nascent proteins. The N-terminal methionine is often cleaved when the second residue in the primary sequence is small and uncharged (Met-Ala-, Cys, Gly, Pro, Ser, Thr, or Val). This chain is Methionine aminopeptidase 2, found in Schizophyllum commune (strain H4-8 / FGSC 9210) (Split gill fungus).